A 208-amino-acid chain; its full sequence is NAD(P)H-quinone oxidoreductase subunit I (208 aa).

4Fe-4S ferredoxin-type domains follow at residues 55 to 84 (GRIH…VDWV) and 95 to 124 (RNYS…MTEE). The [4Fe-4S] cluster site is built by C64, C67, C70, C74, C104, C107, C110, and C114.

This sequence belongs to the complex I 23 kDa subunit family. As to quaternary structure, NDH-1 is composed of at least 11 different subunits. [4Fe-4S] cluster serves as cofactor.

The protein localises to the cellular thylakoid membrane. The catalysed reaction is a plastoquinone + NADH + (n+1) H(+)(in) = a plastoquinol + NAD(+) + n H(+)(out). It carries out the reaction a plastoquinone + NADPH + (n+1) H(+)(in) = a plastoquinol + NADP(+) + n H(+)(out). In terms of biological role, NDH-1 shuttles electrons from an unknown electron donor, via FMN and iron-sulfur (Fe-S) centers, to quinones in the respiratory and/or the photosynthetic chain. The immediate electron acceptor for the enzyme in this species is believed to be plastoquinone. Couples the redox reaction to proton translocation, and thus conserves the redox energy in a proton gradient. The chain is NAD(P)H-quinone oxidoreductase subunit I from Prochlorococcus marinus subsp. pastoris (strain CCMP1986 / NIES-2087 / MED4).